The sequence spans 428 residues: Dihydroorotase (428 aa).

The Zn(2+) site is built by His-59 and His-61. Substrate contacts are provided by residues 61 to 63 (HFR) and Asn-93. Zn(2+) is bound by residues Asp-151, His-178, and His-231. Substrate is bound at residue Asn-277. Asp-304 contacts Zn(2+). Asp-304 is a catalytic residue. Residues His-308 and 322–323 (FG) each bind substrate.

Belongs to the metallo-dependent hydrolases superfamily. DHOase family. Class I DHOase subfamily. As to quaternary structure, homodimer. Zn(2+) is required as a cofactor.

It catalyses the reaction (S)-dihydroorotate + H2O = N-carbamoyl-L-aspartate + H(+). The protein operates within pyrimidine metabolism; UMP biosynthesis via de novo pathway; (S)-dihydroorotate from bicarbonate: step 3/3. In terms of biological role, catalyzes the reversible cyclization of carbamoyl aspartate to dihydroorotate. The protein is Dihydroorotase of Bacillus subtilis (strain 168).